The sequence spans 193 residues: dCTP deaminase (193 aa).

DCTP contacts are provided by residues 110 to 115 (RSSLAR), aspartate 128, 136 to 138 (VLE), tyrosine 171, lysine 178, and glutamine 182. Catalysis depends on glutamate 138, which acts as the Proton donor/acceptor. Residues 169-193 (RPYNRREDAKYRNQQGAVASRIDKD) are disordered.

This sequence belongs to the dCTP deaminase family. In terms of assembly, homotrimer.

The enzyme catalyses dCTP + H2O + H(+) = dUTP + NH4(+). It functions in the pathway pyrimidine metabolism; dUMP biosynthesis; dUMP from dCTP (dUTP route): step 1/2. Its function is as follows. Catalyzes the deamination of dCTP to dUTP. The polypeptide is dCTP deaminase (Sodalis glossinidius (strain morsitans)).